Consider the following 353-residue polypeptide: Holliday junction branch migration complex subunit RuvB (353 aa).

A large ATPase domain (RuvB-L) region spans residues 4–190 (HYIRFKIMTN…FGIPMRLNFY (187 aa)). ATP-binding positions include isoleucine 29, arginine 30, glycine 71, lysine 74, threonine 75, threonine 76, 137–139 (EDF), arginine 180, tyrosine 190, and arginine 227. Threonine 75 is a binding site for Mg(2+). The segment at 191 to 261 (NTEELKKVLN…ISDFGLNRLE (71 aa)) is small ATPAse domain (RuvB-S). Residues 264–353 (RIGLDSNDYR…HQFNIFNEHE (90 aa)) form a head domain (RuvB-H) region. DNA is bound by residues arginine 300, arginine 319, and arginine 324.

It belongs to the RuvB family. In terms of assembly, homohexamer. Forms an RuvA(8)-RuvB(12)-Holliday junction (HJ) complex. HJ DNA is sandwiched between 2 RuvA tetramers; dsDNA enters through RuvA and exits via RuvB. An RuvB hexamer assembles on each DNA strand where it exits the tetramer. Each RuvB hexamer is contacted by two RuvA subunits (via domain III) on 2 adjacent RuvB subunits; this complex drives branch migration. In the full resolvosome a probable DNA-RuvA(4)-RuvB(12)-RuvC(2) complex forms which resolves the HJ.

It is found in the cytoplasm. It carries out the reaction ATP + H2O = ADP + phosphate + H(+). Functionally, the RuvA-RuvB-RuvC complex processes Holliday junction (HJ) DNA during genetic recombination and DNA repair, while the RuvA-RuvB complex plays an important role in the rescue of blocked DNA replication forks via replication fork reversal (RFR). RuvA specifically binds to HJ cruciform DNA, conferring on it an open structure. The RuvB hexamer acts as an ATP-dependent pump, pulling dsDNA into and through the RuvAB complex. RuvB forms 2 homohexamers on either side of HJ DNA bound by 1 or 2 RuvA tetramers; 4 subunits per hexamer contact DNA at a time. Coordinated motions by a converter formed by DNA-disengaged RuvB subunits stimulates ATP hydrolysis and nucleotide exchange. Immobilization of the converter enables RuvB to convert the ATP-contained energy into a lever motion, pulling 2 nucleotides of DNA out of the RuvA tetramer per ATP hydrolyzed, thus driving DNA branch migration. The RuvB motors rotate together with the DNA substrate, which together with the progressing nucleotide cycle form the mechanistic basis for DNA recombination by continuous HJ branch migration. Branch migration allows RuvC to scan DNA until it finds its consensus sequence, where it cleaves and resolves cruciform DNA. This is Holliday junction branch migration complex subunit RuvB from Rickettsia massiliae (strain Mtu5).